The sequence spans 276 residues: Large ribosomal subunit protein uL2 (276 aa).

The disordered stretch occupies residues 224–276 (AMNPVDHPLGGGEGKSSGGRHPVTPWGKPTKGYKTRNKKKPSSKLIVKRRGQK). Residues 254 to 276 (KGYKTRNKKKPSSKLIVKRRGQK) show a composition bias toward basic residues.

Belongs to the universal ribosomal protein uL2 family. Part of the 50S ribosomal subunit. Forms a bridge to the 30S subunit in the 70S ribosome.

Its function is as follows. One of the primary rRNA binding proteins. Required for association of the 30S and 50S subunits to form the 70S ribosome, for tRNA binding and peptide bond formation. It has been suggested to have peptidyltransferase activity; this is somewhat controversial. Makes several contacts with the 16S rRNA in the 70S ribosome. The polypeptide is Large ribosomal subunit protein uL2 (Solidesulfovibrio magneticus (strain ATCC 700980 / DSM 13731 / RS-1) (Desulfovibrio magneticus)).